We begin with the raw amino-acid sequence, 465 residues long: Myosin-6 (465 aa).

The region spanning I1–P35 is the Myosin motor domain. Residues L36–R465 are a coiled coil. Phosphoserine occurs at positions 285 and 334. Y456 carries the phosphotyrosine modification.

Muscle myosin is a hexameric protein that consists of 2 heavy chain subunits (MHC), 2 alkali light chain subunits (MLC) and 2 regulatory light chain subunits (MLC-2).

The protein localises to the cytoplasm. Its subcellular location is the myofibril. In terms of biological role, muscle contraction. This Oryctolagus cuniculus (Rabbit) protein is Myosin-6 (MYH6).